The following is a 740-amino-acid chain: DNA-directed RNA polymerase subunit beta' (740 aa).

Residues C65, C67, C103, and C106 each coordinate Zn(2+). Positions 539, 541, and 543 each coordinate Mg(2+).

This sequence belongs to the RNA polymerase beta' chain family. RpoC1 subfamily. In plastids the minimal PEP RNA polymerase catalytic core is composed of four subunits: alpha, beta, beta', and beta''. When a (nuclear-encoded) sigma factor is associated with the core the holoenzyme is formed, which can initiate transcription. Mg(2+) serves as cofactor. Zn(2+) is required as a cofactor.

The protein localises to the plastid. Its subcellular location is the chloroplast. It catalyses the reaction RNA(n) + a ribonucleoside 5'-triphosphate = RNA(n+1) + diphosphate. In terms of biological role, DNA-dependent RNA polymerase catalyzes the transcription of DNA into RNA using the four ribonucleoside triphosphates as substrates. The polypeptide is DNA-directed RNA polymerase subunit beta' (Ostreococcus tauri).